The sequence spans 504 residues: MELLTGTDLWPVAIFTVIFILLVDLTHQRQRWTSRYPPGPVPWPVLGNLLQVDLGNMPYSLYKLQNRYGDVFSLQMAWKPMVVINGLKAMKEMLLTCGEDTADRPPVPIFEYLGVKPGSQGVVLAPYGPEWREQRRFSVSTLRNFGLGKKSLEDWVTKEANHLCDAFTAQAGQPINPNPMLNKSTCNVIASLIFARRFEYEDPFLIRMLKVLEQSLTEVSGLIPEVLNAFPILLRIPRLADKALQGQKSFIAILDNLLTENRTTWDPVQAPRNLTDAFLAEIEKAKGNPESSFNDENLLMVVRDLFGAGMLTTSTTLSWALMLMILHPDVQRRVQQEIDEVIGQVRHPEMADQAHMPYTNAVIHEVQRFGDIVPVNLPRITSHDIEVQDFLIPKGTILLPNMSSMLKDESVWEKPLRFHPEHFLDAQGHFVKPEAFMPFSAGRRSCLGEALARMELFLFFTCLLQRFSFSVPDGQPQPSNSGVYGILVAPSPYQLCAVVRDQGH.

Residue S249 is modified to Phosphoserine. C446 serves as a coordination point for heme.

This sequence belongs to the cytochrome P450 family. Heme is required as a cofactor.

It is found in the endoplasmic reticulum membrane. Its subcellular location is the microsome membrane. The enzyme catalyses an organic molecule + reduced [NADPH--hemoprotein reductase] + O2 = an alcohol + oxidized [NADPH--hemoprotein reductase] + H2O + H(+). Functionally, cytochromes P450 are a group of heme-thiolate monooxygenases. In liver microsomes, this enzyme is involved in an NADPH-dependent electron transport pathway. It oxidizes a variety of structurally unrelated compounds, including steroids, fatty acids, and xenobiotics. This Mus musculus (Mouse) protein is Cytochrome P450 2D9 (Cyp2d9).